Here is a 621-residue protein sequence, read N- to C-terminus: Glutamyl-tRNA(Gln) amidotransferase subunit B, mitochondrial (621 aa).

The transit peptide at 1–41 (MARLPTTELRKYLLTGQFTRRGCLHLRPSPLAPPIPPLRTL) directs the protein to the mitochondrion. 2 disordered regions span residues 26-86 (LRPS…DNQT) and 106-136 (SKLFSPASTPSSSSDDAVHHHHPNTHVAPFD). Composition is skewed to low complexity over residues 38–57 (LRTLSTTPPTPSDQQPQIIP) and 110–120 (SPASTPSSSSD).

It belongs to the GatB/GatE family. GatB subfamily. In terms of assembly, subunit of the heterotrimeric GatCAB amidotransferase (AdT) complex, composed of A, B and C subunits.

It localises to the mitochondrion. The enzyme catalyses L-glutamyl-tRNA(Gln) + L-glutamine + ATP + H2O = L-glutaminyl-tRNA(Gln) + L-glutamate + ADP + phosphate + H(+). Functionally, allows the formation of correctly charged Gln-tRNA(Gln) through the transamidation of misacylated Glu-tRNA(Gln) in the mitochondria. The reaction takes place in the presence of glutamine and ATP through an activated gamma-phospho-Glu-tRNA(Gln). The chain is Glutamyl-tRNA(Gln) amidotransferase subunit B, mitochondrial from Podospora anserina (strain S / ATCC MYA-4624 / DSM 980 / FGSC 10383) (Pleurage anserina).